Reading from the N-terminus, the 404-residue chain is Probable tRNA sulfurtransferase (404 aa).

Residues glutamate 60–glutamate 165 form the THUMP domain. Residues methionine 183–leucine 184, histidine 208–phenylalanine 209, arginine 265, glycine 287, and glutamine 296 contribute to the ATP site.

This sequence belongs to the ThiI family.

The protein localises to the cytoplasm. The catalysed reaction is [ThiI sulfur-carrier protein]-S-sulfanyl-L-cysteine + a uridine in tRNA + 2 reduced [2Fe-2S]-[ferredoxin] + ATP + H(+) = [ThiI sulfur-carrier protein]-L-cysteine + a 4-thiouridine in tRNA + 2 oxidized [2Fe-2S]-[ferredoxin] + AMP + diphosphate. It catalyses the reaction [ThiS sulfur-carrier protein]-C-terminal Gly-Gly-AMP + S-sulfanyl-L-cysteinyl-[cysteine desulfurase] + AH2 = [ThiS sulfur-carrier protein]-C-terminal-Gly-aminoethanethioate + L-cysteinyl-[cysteine desulfurase] + A + AMP + 2 H(+). The protein operates within cofactor biosynthesis; thiamine diphosphate biosynthesis. Functionally, catalyzes the ATP-dependent transfer of a sulfur to tRNA to produce 4-thiouridine in position 8 of tRNAs, which functions as a near-UV photosensor. Also catalyzes the transfer of sulfur to the sulfur carrier protein ThiS, forming ThiS-thiocarboxylate. This is a step in the synthesis of thiazole, in the thiamine biosynthesis pathway. The sulfur is donated as persulfide by IscS. The polypeptide is Probable tRNA sulfurtransferase (Streptococcus uberis (strain ATCC BAA-854 / 0140J)).